The sequence spans 76 residues: Putative Fe(2+) transport protein A (76 aa).

This sequence belongs to the FeoA family.

Its function is as follows. Might be involved in Fe(2+) ion uptake. The chain is Putative Fe(2+) transport protein A from Helicobacter pylori (strain ATCC 700392 / 26695) (Campylobacter pylori).